The following is a 361-amino-acid chain: Histidinol-phosphate aminotransferase (361 aa).

Lys220 is modified (N6-(pyridoxal phosphate)lysine).

This sequence belongs to the class-II pyridoxal-phosphate-dependent aminotransferase family. Histidinol-phosphate aminotransferase subfamily. Homodimer. It depends on pyridoxal 5'-phosphate as a cofactor.

It catalyses the reaction L-histidinol phosphate + 2-oxoglutarate = 3-(imidazol-4-yl)-2-oxopropyl phosphate + L-glutamate. Its pathway is amino-acid biosynthesis; L-histidine biosynthesis; L-histidine from 5-phospho-alpha-D-ribose 1-diphosphate: step 7/9. This Syntrophus aciditrophicus (strain SB) protein is Histidinol-phosphate aminotransferase.